Here is a 287-residue protein sequence, read N- to C-terminus: 4-hydroxybenzoate octaprenyltransferase (287 aa).

The next 8 membrane-spanning stretches (helical) occupy residues 21 to 39 (PIGT…WLAA), 95 to 115 (VLAL…TMNP), 116 to 136 (LTIG…FMKR), 138 to 158 (IPIP…MAYA), 161 to 181 (ANAL…WTIA), 213 to 233 (IIGA…QLSE), 234 to 251 (LGSS…LFVY), and 264 to 284 (CFQA…GVVI).

This sequence belongs to the UbiA prenyltransferase family. Mg(2+) serves as cofactor.

The protein resides in the cell inner membrane. The enzyme catalyses all-trans-octaprenyl diphosphate + 4-hydroxybenzoate = 4-hydroxy-3-(all-trans-octaprenyl)benzoate + diphosphate. It participates in cofactor biosynthesis; ubiquinone biosynthesis. Its function is as follows. Catalyzes the prenylation of para-hydroxybenzoate (PHB) with an all-trans polyprenyl group. Mediates the second step in the final reaction sequence of ubiquinone-8 (UQ-8) biosynthesis, which is the condensation of the polyisoprenoid side chain with PHB, generating the first membrane-bound Q intermediate 3-octaprenyl-4-hydroxybenzoate. The chain is 4-hydroxybenzoate octaprenyltransferase from Aeromonas hydrophila subsp. hydrophila (strain ATCC 7966 / DSM 30187 / BCRC 13018 / CCUG 14551 / JCM 1027 / KCTC 2358 / NCIMB 9240 / NCTC 8049).